Here is a 400-residue protein sequence, read N- to C-terminus: Enoyl-[acyl-carrier-protein] reductase [NADH] (400 aa).

NAD(+)-binding positions include 48–53 (GASTGY), 74–75 (FE), 111–112 (DA), and 139–140 (LA). Tyr225 is a binding site for substrate. Residue Tyr235 is the Proton donor of the active site. NAD(+)-binding positions include Lys244 and 273–275 (VVT).

The protein belongs to the TER reductase family. As to quaternary structure, monomer.

The catalysed reaction is a 2,3-saturated acyl-[ACP] + NAD(+) = a (2E)-enoyl-[ACP] + NADH + H(+). The protein operates within lipid metabolism; fatty acid biosynthesis. Functionally, involved in the final reduction of the elongation cycle of fatty acid synthesis (FAS II). Catalyzes the reduction of a carbon-carbon double bond in an enoyl moiety that is covalently linked to an acyl carrier protein (ACP). This is Enoyl-[acyl-carrier-protein] reductase [NADH] from Burkholderia multivorans (strain ATCC 17616 / 249).